Reading from the N-terminus, the 672-residue chain is Poly-beta-1,6-N-acetyl-D-glucosamine N-deacetylase (672 aa).

The N-terminal stretch at 1–20 (MLRNGNKYLLMLVSIIMLTA) is a signal peptide. A lipid anchor (N-palmitoyl cysteine) is attached at Cys21. A lipid anchor (S-diacylglycerol cysteine) is attached at Cys21. In terms of domain architecture, NodB homology spans 107–349 (KAVVLTFDDG…IQRVKDMQIS (243 aa)).

This sequence belongs to the polysaccharide deacetylase family.

Its subcellular location is the cell outer membrane. Its function is as follows. Catalyzes the N-deacetylation of poly-beta-1,6-N-acetyl-D-glucosamine (PGA), a biofilm adhesin polysaccharide. N-deacetylation promotes PGA export through the PgaA porin. This Escherichia coli (strain K12) protein is Poly-beta-1,6-N-acetyl-D-glucosamine N-deacetylase (pgaB).